Reading from the N-terminus, the 241-residue chain is Uridylate kinase (241 aa).

14-17 (KLSG) contributes to the ATP binding site. Residues 22–27 (GNQGFG) form an involved in allosteric activation by GTP region. Gly-56 lines the UMP pocket. ATP-binding residues include Gly-57 and Arg-61. UMP-binding positions include Asp-76 and 137-144 (TGNPYFTT). Thr-164, Tyr-170, and Asp-173 together coordinate ATP.

It belongs to the UMP kinase family. As to quaternary structure, homohexamer.

The protein resides in the cytoplasm. The enzyme catalyses UMP + ATP = UDP + ADP. The protein operates within pyrimidine metabolism; CTP biosynthesis via de novo pathway; UDP from UMP (UMPK route): step 1/1. Its activity is regulated as follows. Allosterically activated by GTP. Inhibited by UTP. Its function is as follows. Catalyzes the reversible phosphorylation of UMP to UDP. The sequence is that of Uridylate kinase from Syntrophotalea carbinolica (strain DSM 2380 / NBRC 103641 / GraBd1) (Pelobacter carbinolicus).